Reading from the N-terminus, the 491-residue chain is Probable glycine dehydrogenase (decarboxylating) subunit 2 (491 aa).

Residue lysine 264 is modified to N6-(pyridoxal phosphate)lysine.

This sequence belongs to the GcvP family. C-terminal subunit subfamily. In terms of assembly, the glycine cleavage system is composed of four proteins: P, T, L and H. In this organism, the P 'protein' is a heterodimer of two subunits. The cofactor is pyridoxal 5'-phosphate.

The enzyme catalyses N(6)-[(R)-lipoyl]-L-lysyl-[glycine-cleavage complex H protein] + glycine + H(+) = N(6)-[(R)-S(8)-aminomethyldihydrolipoyl]-L-lysyl-[glycine-cleavage complex H protein] + CO2. Its function is as follows. The glycine cleavage system catalyzes the degradation of glycine. The P protein binds the alpha-amino group of glycine through its pyridoxal phosphate cofactor; CO(2) is released and the remaining methylamine moiety is then transferred to the lipoamide cofactor of the H protein. The polypeptide is Probable glycine dehydrogenase (decarboxylating) subunit 2 (Coxiella burnetii (strain Dugway 5J108-111)).